The following is a 102-amino-acid chain: Aspartyl/glutamyl-tRNA(Asn/Gln) amidotransferase subunit C (102 aa).

It belongs to the GatC family. In terms of assembly, heterotrimer of A, B and C subunits.

The enzyme catalyses L-glutamyl-tRNA(Gln) + L-glutamine + ATP + H2O = L-glutaminyl-tRNA(Gln) + L-glutamate + ADP + phosphate + H(+). The catalysed reaction is L-aspartyl-tRNA(Asn) + L-glutamine + ATP + H2O = L-asparaginyl-tRNA(Asn) + L-glutamate + ADP + phosphate + 2 H(+). Allows the formation of correctly charged Asn-tRNA(Asn) or Gln-tRNA(Gln) through the transamidation of misacylated Asp-tRNA(Asn) or Glu-tRNA(Gln) in organisms which lack either or both of asparaginyl-tRNA or glutaminyl-tRNA synthetases. The reaction takes place in the presence of glutamine and ATP through an activated phospho-Asp-tRNA(Asn) or phospho-Glu-tRNA(Gln). The polypeptide is Aspartyl/glutamyl-tRNA(Asn/Gln) amidotransferase subunit C (Mycobacteroides abscessus (strain ATCC 19977 / DSM 44196 / CCUG 20993 / CIP 104536 / JCM 13569 / NCTC 13031 / TMC 1543 / L948) (Mycobacterium abscessus)).